The chain runs to 596 residues: Probable protein S-acyltransferase 22 (596 aa).

2 helical membrane passes run 15 to 35 and 44 to 64; these read VVAV…FAPF and IAMG…IWCA. Residues 102–125 are disordered; that stretch reads TGGAKSHDGTCVEDTENGSNKKLE. The DHHC domain occupies 163 to 213; that stretch reads FYCSLCEVEVFKYSKHCRVCDKCVDRFDHHCRWLNNCIGKRNYRKFFSLMV. Cysteine 193 acts as the S-palmitoyl cysteine intermediate in catalysis. 2 helical membrane-spanning segments follow: residues 215 to 235 and 254 to 274; these read AIFL…LCLL and LIPF…ATLP. 3 disordered regions span residues 433-455, 498-523, and 549-596; these read SGRR…RRQS, QTSR…DSHD, and MGQQ…HKSR. Residues 498 to 518 are compositionally biased toward polar residues; the sequence is QTSRAMSGSGNVMVTSSPESS. Residues 549-571 are compositionally biased toward low complexity; the sequence is MGQQRGQQQQQQLSMMMMPLSRS.

Belongs to the DHHC palmitoyltransferase family.

Its subcellular location is the cell membrane. The protein resides in the cytoplasmic vesicle membrane. It carries out the reaction L-cysteinyl-[protein] + hexadecanoyl-CoA = S-hexadecanoyl-L-cysteinyl-[protein] + CoA. In terms of biological role, palmitoyl acyltransferase. In Arabidopsis thaliana (Mouse-ear cress), this protein is Probable protein S-acyltransferase 22 (PAT22).